A 41-amino-acid polypeptide reads, in one-letter code: MNDLQKYLSTAPVLLTLWMTFTAGFIIEINRFFPDMLGLYF.

A helical membrane pass occupies residues 7–27 (YLSTAPVLLTLWMTFTAGFII).

Belongs to the PsaJ family.

Its subcellular location is the plastid. It is found in the chloroplast thylakoid membrane. In terms of biological role, may help in the organization of the PsaE and PsaF subunits. This is Photosystem I reaction center subunit IX from Trieres chinensis (Marine centric diatom).